The primary structure comprises 725 residues: ATP-dependent zinc metalloprotease FtsH (725 aa).

Residues 1–11 (MDKMKKPKINW) lie on the Cytoplasmic side of the membrane. The chain crosses the membrane as a helical span at residues 12–32 (LLIVIVGIIAALLITVLVLLF). Residues 33-160 (SPKTQPKSFD…LFGQHIVQEN (128 aa)) lie on the Extracellular side of the membrane. The chain crosses the membrane as a helical span at residues 161 to 181 (GFITFIKAIWFPALIAIIIFL). Residues 182-725 (GYKAQSRAAS…EEETLAEKAE (544 aa)) are Cytoplasmic-facing. 252-259 (GPPGTGKT) contacts ATP. H474 is a Zn(2+) binding site. E475 is a catalytic residue. 2 residues coordinate Zn(2+): H478 and D552. The segment at 680-725 (QVNESQEKDKQKNAQIKEDLSKMDKKDNLTKAKDKGEEETLAEKAE) is disordered. Positions 684-725 (SQEKDKQKNAQIKEDLSKMDKKDNLTKAKDKGEEETLAEKAE) are enriched in basic and acidic residues.

In the central section; belongs to the AAA ATPase family. The protein in the C-terminal section; belongs to the peptidase M41 family. As to quaternary structure, homohexamer. It depends on Zn(2+) as a cofactor.

The protein localises to the cell membrane. Functionally, acts as a processive, ATP-dependent zinc metallopeptidase for both cytoplasmic and membrane proteins. Plays a role in the quality control of integral membrane proteins. The polypeptide is ATP-dependent zinc metalloprotease FtsH (Mycoplasmopsis pulmonis (strain UAB CTIP) (Mycoplasma pulmonis)).